We begin with the raw amino-acid sequence, 323 residues long: tRNA U34 carboxymethyltransferase (323 aa).

Carboxy-S-adenosyl-L-methionine is bound by residues lysine 91, tryptophan 105, lysine 110, glycine 130, 152–154 (DPT), 181–182 (IE), methionine 196, tyrosine 200, and arginine 315.

Belongs to the class I-like SAM-binding methyltransferase superfamily. CmoB family. As to quaternary structure, homotetramer.

It catalyses the reaction carboxy-S-adenosyl-L-methionine + 5-hydroxyuridine(34) in tRNA = 5-carboxymethoxyuridine(34) in tRNA + S-adenosyl-L-homocysteine + H(+). Its function is as follows. Catalyzes carboxymethyl transfer from carboxy-S-adenosyl-L-methionine (Cx-SAM) to 5-hydroxyuridine (ho5U) to form 5-carboxymethoxyuridine (cmo5U) at position 34 in tRNAs. In Salmonella paratyphi A (strain ATCC 9150 / SARB42), this protein is tRNA U34 carboxymethyltransferase.